The primary structure comprises 876 residues: Alanine--tRNA ligase (876 aa).

Residues H565, H569, C667, and H671 each contribute to the Zn(2+) site.

Belongs to the class-II aminoacyl-tRNA synthetase family. The cofactor is Zn(2+).

The protein localises to the cytoplasm. The enzyme catalyses tRNA(Ala) + L-alanine + ATP = L-alanyl-tRNA(Ala) + AMP + diphosphate. Its function is as follows. Catalyzes the attachment of alanine to tRNA(Ala) in a two-step reaction: alanine is first activated by ATP to form Ala-AMP and then transferred to the acceptor end of tRNA(Ala). Also edits incorrectly charged Ser-tRNA(Ala) and Gly-tRNA(Ala) via its editing domain. This is Alanine--tRNA ligase from Staphylococcus aureus (strain MRSA252).